The chain runs to 414 residues: Histidine--tRNA ligase (414 aa).

It belongs to the class-II aminoacyl-tRNA synthetase family. In terms of assembly, homodimer.

The protein resides in the cytoplasm. It catalyses the reaction tRNA(His) + L-histidine + ATP = L-histidyl-tRNA(His) + AMP + diphosphate + H(+). The polypeptide is Histidine--tRNA ligase (Ehrlichia ruminantium (strain Welgevonden)).